Consider the following 123-residue polypeptide: uncharacterized protein (123 aa).

Disordered stretches follow at residues 1 to 21 and 82 to 123; these read MGAPGGKINRPRTELKKKLFK and EKTA…EDES.

This is an uncharacterized protein from Homo sapiens (Human).